Reading from the N-terminus, the 222-residue chain is Kinetochore protein Spc25 (222 aa).

Positions 51–100 (RHQRKVGKLQKVIMERREELDKRVSFIEELDRELEATKLRSLAMKDRIKQ) form a coiled coil.

This sequence belongs to the SPC25 family. In terms of assembly, component of the Ndc80 complex, which is composed of Ndc80, Nuf2 and Spc25.

It localises to the nucleus. Its subcellular location is the chromosome. It is found in the centromere. The protein resides in the kinetochore. Acts as a component of the essential kinetochore-associated Ndc80 complex, which is required for chromosome segregation and spindle checkpoint activity during meiosis and mitosis. Required for kinetochore integrity and the organization of stable microtubule binding sites in the outer plate of the kinetochore. Participates in SAC signaling that responds specifically to disruptions in spindle microtubule dynamics. The NDC80 complex synergistically enhances the affinity of the SKA1 complex for microtubules and may allow the NDC80 complex to track depolymerizing microtubules. The sequence is that of Kinetochore protein Spc25 from Drosophila sechellia (Fruit fly).